The chain runs to 100 residues: Urease subunit gamma (100 aa).

The protein belongs to the urease gamma subunit family. In terms of assembly, heterotrimer of UreA (gamma), UreB (beta) and UreC (alpha) subunits. Three heterotrimers associate to form the active enzyme.

The protein localises to the cytoplasm. It carries out the reaction urea + 2 H2O + H(+) = hydrogencarbonate + 2 NH4(+). The protein operates within nitrogen metabolism; urea degradation; CO(2) and NH(3) from urea (urease route): step 1/1. This chain is Urease subunit gamma, found in Mycolicibacterium gilvum (strain PYR-GCK) (Mycobacterium gilvum (strain PYR-GCK)).